The following is a 313-amino-acid chain: PDCD10 and GCKIII kinases-associated protein 1 (313 aa).

The segment at 42 to 95 is disordered; it reads KGTQNSEVEVPGSTLHSGSLSKPDSSGSTTGLPCQGSLTQEDSEERPCVEKHGI. Over residues 58 to 69 the composition is skewed to low complexity; that stretch reads SGSLSKPDSSGS. S60 is modified (phosphoserine). Positions 70–81 are enriched in polar residues; it reads TTGLPCQGSLTQ. T104 carries the phosphothreonine modification. A phosphoserine mark is found at S107, S237, and S240. The disordered stretch occupies residues 253 to 288; the sequence is YFKEEDPTQPTPVADPGNEREDPHTYNGNKEGAVVD.

Interacts with KEAP1; this interaction prevents the ubiquitination of KEAP1 by TRIM25, thus protecting KEAP1 from degradation. Found in association with PDCD10 and members of the STE20 kinases, such as STK24, STK25, and STK26.

The protein resides in the cell membrane. Acts as a tumor suppressor. Acts as a tumor suppressor for colorectal cancer cell proliferation by targeting KEAP1/USP17/ELK1/CDK6 axis. In Rattus norvegicus (Rat), this protein is PDCD10 and GCKIII kinases-associated protein 1.